The sequence spans 55 residues: uncharacterized protein (55 aa).

Residues 1–25 (MKNNDKKKEVQRKYREEIKKKKQKN) form a disordered region. Residues 35–55 (TIIVVTIIVLFIFFTYTLQGF) form a helical membrane-spanning segment.

The protein resides in the membrane. This is an uncharacterized protein from Bacillus subtilis (strain 168).